We begin with the raw amino-acid sequence, 217 residues long: Orotidine 5'-phosphate decarboxylase (217 aa).

Substrate contacts are provided by residues D14, K36, 64-73 (DFKVADIPST), S120, 172-182 (PGVGAQGGNLS), G197, and R198. K66 functions as the Proton donor in the catalytic mechanism.

Belongs to the OMP decarboxylase family. Type 1 subfamily. Homodimer.

It catalyses the reaction orotidine 5'-phosphate + H(+) = UMP + CO2. Its pathway is pyrimidine metabolism; UMP biosynthesis via de novo pathway; UMP from orotate: step 2/2. Catalyzes the decarboxylation of orotidine 5'-monophosphate (OMP) to uridine 5'-monophosphate (UMP). In Methanococcus maripaludis (strain C6 / ATCC BAA-1332), this protein is Orotidine 5'-phosphate decarboxylase.